The following is a 272-amino-acid chain: Eukaryotic translation initiation factor 3 subunit G (272 aa).

Disordered stretches follow at residues 1 to 28 (MPAL…PTEI) and 157 to 188 (APTT…GRDD). An RRM domain is found at 190–268 (TAIRISNLSE…LILNVEWSKP (79 aa)).

It belongs to the eIF-3 subunit G family. As to quaternary structure, component of the eukaryotic translation initiation factor 3 (eIF-3) complex.

The protein localises to the cytoplasm. In terms of biological role, RNA-binding component of the eukaryotic translation initiation factor 3 (eIF-3) complex, which is involved in protein synthesis of a specialized repertoire of mRNAs and, together with other initiation factors, stimulates binding of mRNA and methionyl-tRNAi to the 40S ribosome. The eIF-3 complex specifically targets and initiates translation of a subset of mRNAs involved in cell proliferation. This subunit can bind 18S rRNA. The polypeptide is Eukaryotic translation initiation factor 3 subunit G (Aedes aegypti (Yellowfever mosquito)).